Here is a 237-residue protein sequence, read N- to C-terminus: Large ribosomal subunit protein uL2 (237 aa).

Residues 1–11 (MGKRLISQNRG) show a composition bias toward polar residues. 2 disordered regions span residues 1 to 26 (MGKRLISQNRGRGTPKYRSPSHKRKG) and 204 to 237 (PYGGGRHQHLGKPSSVSRNTSPGRKVGHIASRRT). Composition is skewed to basic residues over residues 13 to 26 (GTPKYRSPSHKRKG) and 228 to 237 (KVGHIASRRT).

This sequence belongs to the universal ribosomal protein uL2 family. As to quaternary structure, part of the 50S ribosomal subunit. Forms a bridge to the 30S subunit in the 70S ribosome.

One of the primary rRNA binding proteins. Required for association of the 30S and 50S subunits to form the 70S ribosome, for tRNA binding and peptide bond formation. It has been suggested to have peptidyltransferase activity; this is somewhat controversial. Makes several contacts with the 16S rRNA in the 70S ribosome. This chain is Large ribosomal subunit protein uL2, found in Methanococcus vannielii.